We begin with the raw amino-acid sequence, 514 residues long: Bifunctional purine biosynthesis protein PurH (514 aa).

The MGS-like domain occupies 1 to 146; that stretch reads MPPLALLSTS…KNFAHVTVLC (146 aa).

It belongs to the PurH family.

It carries out the reaction (6R)-10-formyltetrahydrofolate + 5-amino-1-(5-phospho-beta-D-ribosyl)imidazole-4-carboxamide = 5-formamido-1-(5-phospho-D-ribosyl)imidazole-4-carboxamide + (6S)-5,6,7,8-tetrahydrofolate. The enzyme catalyses IMP + H2O = 5-formamido-1-(5-phospho-D-ribosyl)imidazole-4-carboxamide. It participates in purine metabolism; IMP biosynthesis via de novo pathway; 5-formamido-1-(5-phospho-D-ribosyl)imidazole-4-carboxamide from 5-amino-1-(5-phospho-D-ribosyl)imidazole-4-carboxamide (10-formyl THF route): step 1/1. It functions in the pathway purine metabolism; IMP biosynthesis via de novo pathway; IMP from 5-formamido-1-(5-phospho-D-ribosyl)imidazole-4-carboxamide: step 1/1. The polypeptide is Bifunctional purine biosynthesis protein PurH (Cyanothece sp. (strain PCC 7425 / ATCC 29141)).